An 82-amino-acid polypeptide reads, in one-letter code: Diphthamide biosynthesis protein 3 (82 aa).

The region spanning 8 to 64 (IYDEVEIEDMTYDPALQTYSYPCPCGDKFEIALADLQDGQDIAVCPSCSLMVRVIFE) is the DPH-type MB domain. Fe cation-binding residues include Cys-30, Cys-32, Cys-52, and Cys-55.

It belongs to the DPH3 family. Component of the 2-(3-amino-3-carboxypropyl)histidine synthase complex composed of dph-1, dph-2, dph-3 and a NADH-dependent reductase, predominantly cbr-1. Fe(2+) is required as a cofactor.

Its subcellular location is the cytoplasm. The protein localises to the nucleus. It catalyses the reaction [3Fe-4S](1+)-[protein] + Fe(2+)-[Dph3] = [3Fe-4S](0)-[protein] + Fe(3+)-[Dph3]. It carries out the reaction 2 [3Fe-4S](0)-[protein] + 2 Fe(2+)-[Dph3] + NADH = 2 [4Fe-4S](1+)-[protein] + 2 [Dph3] + NAD(+) + H(+). The protein operates within protein modification; peptidyl-diphthamide biosynthesis. Functionally, required for the first step of diphthamide biosynthesis, a post-translational modification of histidine which occurs in elongation factor 2. Dph-1 and dph-2 transfer a 3-amino-3-carboxypropyl (ACP) group from S-adenosyl-L-methionine (SAM) to a histidine residue, the reaction is assisted by a reduction system comprising dph-3 and a NADH-dependent reductase, predominantly cbr-1. Acts as an electron donor to reduce the Fe-S cluster in dph1-dph2 keeping the [4Fe-4S] clusters in the active and reduced state. Restores iron to dph-1-dph-2 iron-sulfur clusters which have degraded from [4Fe-4S] to [3Fe-4S] by donating an iron atom to reform [4Fe-4S] clusters, in a manner dependent on the presence of elongation factor 2 and SAM. Associates with the elongator complex and is required for tRNA Wobble base modifications mediated by the elongator complex. The elongator complex is required for multiple tRNA modifications, including mcm5U (5-methoxycarbonylmethyl uridine), mcm5s 2U (5-methoxycarbonylmethyl-2-thiouridine), and ncm5U (5-carbamoylmethyl uridine). This is Diphthamide biosynthesis protein 3 (dph-3) from Neurospora crassa (strain ATCC 24698 / 74-OR23-1A / CBS 708.71 / DSM 1257 / FGSC 987).